The sequence spans 245 residues: Acyl-protein thioesterase 1 (245 aa).

Catalysis depends on charge relay system residues serine 126, aspartate 182, and histidine 214.

This sequence belongs to the AB hydrolase superfamily. AB hydrolase 2 family.

The protein resides in the cytoplasm. It is found in the nucleus. It catalyses the reaction S-hexadecanoyl-L-cysteinyl-[protein] + H2O = L-cysteinyl-[protein] + hexadecanoate + H(+). Functionally, hydrolyzes fatty acids from S-acylated cysteine residues in proteins with a strong preference for palmitoylated G-alpha proteins over other acyl substrates. Mediates the deacylation of G-alpha proteins such as GPA1 in vivo, but has weak or no activity toward palmitoylated Ras proteins. Has weak lysophospholipase activity in vitro; however such activity may not exist in vivo. This chain is Acyl-protein thioesterase 1, found in Neurospora crassa (strain ATCC 24698 / 74-OR23-1A / CBS 708.71 / DSM 1257 / FGSC 987).